Here is a 293-residue protein sequence, read N- to C-terminus: NAD-dependent protein deacetylase (293 aa).

A Deacetylase sirtuin-type domain is found at 1–284 (MTVAITQTGP…QPPDPLHTAT (284 aa)). NAD(+) contacts are provided by residues 27 to 47 (GAGCSTDSGIPDYRDLQGGWK) and 105 to 108 (QNVD). The Proton acceptor role is filled by His-123. Residues Cys-131, Cys-134, Cys-182, and Cys-185 each contribute to the Zn(2+) site. NAD(+)-binding positions include 222–224 (GSS), 248–250 (NFG), and Cys-266.

It belongs to the sirtuin family. Class II subfamily. It depends on Zn(2+) as a cofactor.

It is found in the cytoplasm. The catalysed reaction is N(6)-acetyl-L-lysyl-[protein] + NAD(+) + H2O = 2''-O-acetyl-ADP-D-ribose + nicotinamide + L-lysyl-[protein]. Functionally, NAD-dependent protein deacetylase which modulates the activities of several enzymes which are inactive in their acetylated form. This Xanthomonas campestris pv. campestris (strain 8004) protein is NAD-dependent protein deacetylase.